Here is a 435-residue protein sequence, read N- to C-terminus: Gamma-glutamyl phosphate reductase (435 aa).

Belongs to the gamma-glutamyl phosphate reductase family.

The protein resides in the cytoplasm. The enzyme catalyses L-glutamate 5-semialdehyde + phosphate + NADP(+) = L-glutamyl 5-phosphate + NADPH + H(+). The protein operates within amino-acid biosynthesis; L-proline biosynthesis; L-glutamate 5-semialdehyde from L-glutamate: step 2/2. Functionally, catalyzes the NADPH-dependent reduction of L-glutamate 5-phosphate into L-glutamate 5-semialdehyde and phosphate. The product spontaneously undergoes cyclization to form 1-pyrroline-5-carboxylate. The sequence is that of Gamma-glutamyl phosphate reductase from Xylella fastidiosa (strain M12).